The following is a 24-amino-acid chain: Homotarsinin (24 aa).

The residue at position 24 (R24) is an Arginine amide.

As to quaternary structure, homodimer; disulfide-linked. In terms of tissue distribution, expressed by the skin glands.

The protein resides in the secreted. In terms of biological role, antimicrobial peptide. Active against Gram-negative bacteria E.coli ATCC 25922 (MIC=1.5 uM) and P.aeruginosa ATTC 27853 (MIC=23.2 uM) and against Gram-positive bacterium S.aureus ATCC 29313 (MIC=11.6 uM). Has no hemolytic activity. Associates with and disrupts membranes in vitro. The polypeptide is Homotarsinin (Phyllomedusa tarsius (Brownbelly leaf frog)).